We begin with the raw amino-acid sequence, 469 residues long: 3-isopropylmalate dehydratase large subunit (469 aa).

[4Fe-4S] cluster-binding residues include C350, C410, and C413.

Belongs to the aconitase/IPM isomerase family. LeuC type 1 subfamily. As to quaternary structure, heterodimer of LeuC and LeuD. It depends on [4Fe-4S] cluster as a cofactor.

It carries out the reaction (2R,3S)-3-isopropylmalate = (2S)-2-isopropylmalate. Its pathway is amino-acid biosynthesis; L-leucine biosynthesis; L-leucine from 3-methyl-2-oxobutanoate: step 2/4. Its function is as follows. Catalyzes the isomerization between 2-isopropylmalate and 3-isopropylmalate, via the formation of 2-isopropylmaleate. This is 3-isopropylmalate dehydratase large subunit from Brucella abortus (strain S19).